Here is a 219-residue protein sequence, read N- to C-terminus: Glutathione S-transferase F13 (219 aa).

The GST N-terminal domain maps to 2–82; sequence AMKLYGDEMS…YIAEKHRDKG (81 aa). Glutathione is bound by residues 11-12, 40-41, 53-54, and 66-67; these read SA, HK, KV, and ES. Positions 90-217 constitute a GST C-terminal domain; that stretch reads DPKEAAIVKL…VSPGLTVAPT (128 aa).

Belongs to the GST superfamily. Phi family.

It is found in the cytoplasm. The protein resides in the cytosol. It catalyses the reaction RX + glutathione = an S-substituted glutathione + a halide anion + H(+). Its function is as follows. May be involved in the conjugation of reduced glutathione to a wide number of exogenous and endogenous hydrophobic electrophiles and have a detoxification role against certain herbicides. The sequence is that of Glutathione S-transferase F13 (GSTF13) from Arabidopsis thaliana (Mouse-ear cress).